We begin with the raw amino-acid sequence, 78 residues long: D-alanyl carrier protein (78 aa).

Residues 1-78 enclose the Carrier domain; the sequence is MEFKEQVLDL…KIVEALEELR (78 aa). The residue at position 36 (S36) is an O-(pantetheine 4'-phosphoryl)serine.

This sequence belongs to the DltC family. 4'-phosphopantetheine is transferred from CoA to a specific serine of apo-DCP.

Its subcellular location is the cytoplasm. It participates in cell wall biogenesis; lipoteichoic acid biosynthesis. Carrier protein involved in the D-alanylation of lipoteichoic acid (LTA). The loading of thioester-linked D-alanine onto DltC is catalyzed by D-alanine--D-alanyl carrier protein ligase DltA. The DltC-carried D-alanyl group is further transferred to cell membrane phosphatidylglycerol (PG) by forming an ester bond, probably catalyzed by DltD. D-alanylation of LTA plays an important role in modulating the properties of the cell wall in Gram-positive bacteria, influencing the net charge of the cell wall. The protein is D-alanyl carrier protein of Staphylococcus haemolyticus (strain JCSC1435).